Reading from the N-terminus, the 211-residue chain is Putative transposase for insertion sequence element IS402 (211 aa).

A disordered region spans residues 51–71 (RRWGRPKTGPNPTDRARPGSK).

It belongs to the transposase 11 family.

In terms of biological role, involved in the transposition of the insertion sequence. The chain is Putative transposase for insertion sequence element IS402 from Burkholderia cepacia (Pseudomonas cepacia).